Here is a 420-residue protein sequence, read N- to C-terminus: CinA-like protein (420 aa).

Belongs to the CinA family.

The polypeptide is CinA-like protein (Chloroherpeton thalassium (strain ATCC 35110 / GB-78)).